A 429-amino-acid chain; its full sequence is Carboxypeptidase B (429 aa).

The N-terminal stretch at 1 to 15 (MKFLLVLALCAVVYA) is a signal peptide. The Peptidase M14 domain occupies 121 to 423 (NYQELEVIDE…EGIVVGARRA (303 aa)). The Zn(2+) site is built by H182 and E185. Substrate is bound by residues 182-185 (HARE), R236, and 256-257 (NR). C250 and C273 form a disulfide bridge. H309 provides a ligand contact to Zn(2+). Substrate contacts are provided by residues 310–311 (SF) and Y365. The active-site Proton donor/acceptor is the E387.

It belongs to the peptidase M14 family. It depends on Zn(2+) as a cofactor.

It is found in the secreted. The catalysed reaction is Preferential release of a C-terminal lysine or arginine amino acid.. With respect to regulation, highly resistant to inhibition by potato carboxypeptidase inhibitor (PCI). Moderately inhibited by leech carboxypeptidase inhibitor (LCI) and tick carboxypeptidase inhibitor (TCI). Functionally, metalloprotease which cleaves a single amino acid from the C-terminal end of polypeptide chains. Shows a strong preference for peptides with a terminal lysine residue. The sequence is that of Carboxypeptidase B from Helicoverpa zea (Corn earworm moth).